A 315-amino-acid polypeptide reads, in one-letter code: MAIFKILVLLLSLCCFSQAQLSPTFYDQTCQNALSTIRSSIRTAISRERRMAASLIRLHFHDCFVNGCDASVMLVATPTMESERDSLANFQSARGFEVIDQAKSAVESVCPGVVSCADIIAVAARDASEYVGGPRYDVKVGRRDSTNAFRAIADRDLPNFRASLNDLSELFLRKGLNTRDLVALSGAHTLGQAQCLTFKGRLYDNSSDIDAGFSSTRKRRCPVNGGDTTLAPLDQVTPNSFDNNYYRNLMQKKGLLESDQVLFGTGASTDSIVTEYSRNPSRFASDFSAAMIKMGDIQTLTGSDGQIRRICSAVN.

The signal sequence occupies residues 1-19; sequence MAIFKILVLLLSLCCFSQA. A Pyrrolidone carboxylic acid modification is found at Gln-20. 4 disulfides stabilise this stretch: Cys-30–Cys-110, Cys-63–Cys-68, Cys-116–Cys-311, and Cys-195–Cys-221. His-61 functions as the Proton acceptor in the catalytic mechanism. Ca(2+) is bound by residues Asp-62, Val-65, Gly-67, Asp-69, and Ser-71. Pro-158 provides a ligand contact to substrate. Residue His-188 coordinates heme b. Thr-189 lines the Ca(2+) pocket. The N-linked (GlcNAc...) asparagine glycan is linked to Asn-205. Ca(2+) contacts are provided by Asp-234, Thr-237, and Asp-242.

This sequence belongs to the peroxidase family. Classical plant (class III) peroxidase subfamily. The cofactor is heme b. Ca(2+) serves as cofactor.

It localises to the secreted. It catalyses the reaction 2 a phenolic donor + H2O2 = 2 a phenolic radical donor + 2 H2O. Its function is as follows. Removal of H(2)O(2), oxidation of toxic reductants, biosynthesis and degradation of lignin, suberization, auxin catabolism, response to environmental stresses such as wounding, pathogen attack and oxidative stress. These functions might be dependent on each isozyme/isoform in each plant tissue. The chain is Peroxidase 4 (PER4) from Arabidopsis thaliana (Mouse-ear cress).